Consider the following 476-residue polypeptide: Alkaline phosphatase H (476 aa).

The N-terminal stretch at 1-26 is a signal peptide; that stretch reads MTPGYPLALSLAVSMAVLGSALPAQA. A Mg(2+)-binding site is contributed by D77. Residue D77 participates in Zn(2+) binding. The active-site Phosphoserine intermediate is S128. S128 is subject to Phosphoserine. Positions 179 and 181 each coordinate Mg(2+). Position 206 is a phosphoserine (S206). Q346 serves as a coordination point for Mg(2+). Residues D353, H357, D395, H396, and H438 each coordinate Zn(2+).

This sequence belongs to the alkaline phosphatase family. It depends on Mg(2+) as a cofactor. The cofactor is Zn(2+).

The protein resides in the secreted. It localises to the periplasm. It catalyses the reaction a phosphate monoester + H2O = an alcohol + phosphate. Functionally, has only phosphomonoesterase activity. The sequence is that of Alkaline phosphatase H (phoA) from Pseudomonas aeruginosa (strain UCBPP-PA14).